Consider the following 122-residue polypeptide: Holo-[acyl-carrier-protein] synthase (122 aa).

Mg(2+)-binding residues include Asp8 and Glu52.

This sequence belongs to the P-Pant transferase superfamily. AcpS family. Mg(2+) is required as a cofactor.

The protein localises to the cytoplasm. The enzyme catalyses apo-[ACP] + CoA = holo-[ACP] + adenosine 3',5'-bisphosphate + H(+). Its function is as follows. Transfers the 4'-phosphopantetheine moiety from coenzyme A to a Ser of acyl-carrier-protein. In Lachnoclostridium phytofermentans (strain ATCC 700394 / DSM 18823 / ISDg) (Clostridium phytofermentans), this protein is Holo-[acyl-carrier-protein] synthase.